The sequence spans 1845 residues: Helicase swr-1 (1845 aa).

Over residues 1–13 (MTTMMTDSGTASD) the composition is skewed to polar residues. The segment at 1 to 329 (MTTMMTDSGT…GASRATPRIK (329 aa)) is disordered. The span at 24 to 38 (NDTTTTTTTTTTPGD) shows a compositional bias: low complexity. Over residues 63–84 (SKSYSSTHHVPAIDNTSTTNAN) the composition is skewed to polar residues. Residues 98 to 108 (SPLSSISSPLS) show a composition bias toward low complexity. Positions 168–180 (PKPESPPWKKFEA) are enriched in basic and acidic residues. Residues 216–243 (AIQTSPVSNKSSASTSRKPAPASSSNSK) show a composition bias toward polar residues. 2 stretches are compositionally biased toward pro residues: residues 248–258 (KMPPPPPPPKA) and 283–292 (PRRPATPPKP). Residues 418-493 (PEAEEEPPRQ…EMEASKAKWR (76 aa)) enclose the HSA domain. Disordered regions lie at residues 539-713 (QKLQ…LFFG) and 749-935 (ELQV…TVKT). A compositionally biased stretch (acidic residues) spans 549–565 (DGDEITDEDEDEDDEDL). Positions 574-585 (GDEKESDEHSDQ) are enriched in basic and acidic residues. 2 stretches are compositionally biased toward acidic residues: residues 586–608 (GSDE…SSED) and 663–704 (NDDD…DDEP). Composition is skewed to polar residues over residues 762 to 777 (TNGT…SQTE) and 815 to 834 (TNDS…NQTL). Positions 888 to 897 (SQSQTQSPKT) are enriched in low complexity. Over residues 898–909 (TDTKPTDVDTPH) the composition is skewed to basic and acidic residues. Residues 922–933 (RQSSPQPTTPTV) are compositionally biased toward polar residues. Residues 957 to 1122 (AGLYANNTNG…WSLLYFLAPP (166 aa)) form the Helicase ATP-binding domain. An ATP-binding site is contributed by 970–977 (DEMGLGKT). A DEAH box motif is present at residues 1073–1076 (DEAH). The Helicase C-terminal domain occupies 1510-1660 (ALDKLLRKLQ…DVVIQEGEFT (151 aa)). 3 disordered regions span residues 1702–1724 (TTGA…PPVR), 1751–1783 (QDEA…GGEE), and 1816–1845 (LEGT…SRKR). Gly residues predominate over residues 1704-1718 (GAGGYDGTADGGGGA). The segment covering 1769-1781 (DGLADLDGQLLGG) has biased composition (low complexity). The span at 1826-1845 (DRKKGRDRNRNRKGKDSRKR) shows a compositional bias: basic residues.

Belongs to the SNF2/RAD54 helicase family. SWR1 subfamily. In terms of assembly, component of the SWR1 chromatin-remodeling complex.

The protein resides in the nucleus. It carries out the reaction ATP + H2O = ADP + phosphate + H(+). In terms of biological role, catalytic component of the SWR1 complex which mediates the ATP-dependent exchange of histone H2A for the H2A variant H2A.Z leading to transcriptional regulation of selected genes by chromatin remodeling. This Neurospora crassa (strain ATCC 24698 / 74-OR23-1A / CBS 708.71 / DSM 1257 / FGSC 987) protein is Helicase swr-1 (crf1-1).